A 511-amino-acid polypeptide reads, in one-letter code: Ribonuclease Y (511 aa).

Residues valine 3–isoleucine 23 traverse the membrane as a helical segment. The region spanning threonine 201 to valine 286 is the KH domain. In terms of domain architecture, HD spans valine 327–alanine 420.

It belongs to the RNase Y family.

Its subcellular location is the cell membrane. Its function is as follows. Endoribonuclease that initiates mRNA decay. The chain is Ribonuclease Y from Clostridium perfringens (strain SM101 / Type A).